A 392-amino-acid chain; its full sequence is Trans-2-enoyl-CoA reductase [NADH] (392 aa).

NAD(+) contacts are provided by residues 74–75, 111–112, and 141–142; these read FE, DA, and LA. Tyr227 serves as a coordination point for substrate. Tyr237 serves as the catalytic Proton donor. NAD(+) contacts are provided by residues Lys246 and 276-278; that span reads VVT.

Belongs to the TER reductase family. In terms of assembly, monomer.

It catalyses the reaction a 2,3-saturated acyl-CoA + NAD(+) = a (2E)-enoyl-CoA + NADH + H(+). The protein operates within lipid metabolism; fatty acid biosynthesis. Its function is as follows. Involved in the fatty acid synthesis (FAS II). Catalyzes the reduction of a carbon-carbon double bond in an enoyl moiety that is covalently linked to a coenzyme A (CoA). The sequence is that of Trans-2-enoyl-CoA reductase [NADH] from Brachyspira hyodysenteriae (strain ATCC 49526 / WA1).